Here is an 869-residue protein sequence, read N- to C-terminus: Phosphatidylethanolamine N-methyltransferase (869 aa).

N-acetylserine is present on S2. Residues 2–55 (SSCKTTLSEMVGSVTKDRGTINVEARTRSSNVTFKPPVTHDMVRSLFDPTLKKS) are Lumenal-facing. The chain crosses the membrane as a helical span at residues 56–76 (LLEKCIALAIISNFFICYWVF). At 77–86 (QRFGLQFTKY) the chain is on the cytoplasmic side. Residues 87–107 (FFLVQYLFWRIAYNLGIGLVL) traverse the membrane as a helical segment. Topologically, residues 108 to 187 (HYQSHYETLT…EINVWLIFRQ (80 aa)) are lumenal. Residues 188-208 (FVDLILMQDFVTYIIYVYLSI) form a helical membrane-spanning segment. The Cytoplasmic segment spans residues 209-212 (PYSW). Residues 213–233 (VQIFNWRSLLGVILILFNIWV) form a helical membrane-spanning segment. Over 234 to 258 (KLDAHRVVKDYAWYWGDFFFLEESE) the chain is Lumenal. A helical transmembrane segment spans residues 259 to 279 (LIFDGVFNISPHPMYSIGYLG). At 280–291 (YYGLSLICNDYK) the chain is on the cytoplasmic side. The chain crosses the membrane as a helical span at residues 292-310 (VLLVSVFGHYSQFLFLKYV). Topologically, residues 311–362 (ENPHIERTYGDGTDSDSQMNSRIDDLISKENYDYSRPLINMGLSFNNFNKLR) are lumenal. Residues 363-383 (FTDYFTIGTVAALMLGTIMNA) traverse the membrane as a helical segment. Residues 384 to 389 (RFINLN) lie on the Cytoplasmic side of the membrane. The helical transmembrane segment at 390-410 (YLFITVFVTKLVSWLFISTIL) threads the bilayer. The Lumenal segment spans residues 411 to 439 (YKQSQSKWFTRLFLENGYTQVYSYEQWQF). The chain crosses the membrane as a helical span at residues 440 to 460 (IYNYYLVLTYTLMIIHTGLQI). The Cytoplasmic portion of the chain corresponds to 461–463 (WSN). The chain crosses the membrane as a helical span at residues 464 to 484 (FSNINNSQLIFGLILVALQTW). At 485-534 (CDKETRLAISDFGWFYGDFFLSNYISTRKLTSQGIYRYLNHPEAVLGVVG) the chain is on the lumenal side. The helical transmembrane segment at 535–555 (VWGTVLMTNFAVTNIILAVLW) threads the bilayer. Topologically, residues 556–869 (TLTNFILVKF…DIKQTLDSLA (314 aa)) are cytoplasmic.

Belongs to the class VI-like SAM-binding methyltransferase superfamily. CHO2 family.

It localises to the endoplasmic reticulum membrane. It carries out the reaction a 1,2-diacyl-sn-glycero-3-phosphoethanolamine + S-adenosyl-L-methionine = a 1,2-diacyl-sn-glycero-3-phospho-N-methylethanolamine + S-adenosyl-L-homocysteine + H(+). The protein operates within phospholipid metabolism; phosphatidylcholine biosynthesis. Catalyzes the first step of the methylation pathway of phosphatidylcholine biosynthesis, the SAM-dependent methylation of phosphatidylethanolamine (PE) to phosphatidylmonomethylethanolamine (PMME). Preferentially converts di-C16:1 substrates. This Saccharomyces cerevisiae (strain ATCC 204508 / S288c) (Baker's yeast) protein is Phosphatidylethanolamine N-methyltransferase.